The chain runs to 110 residues: T cell receptor alpha variable 22 (110 aa).

The signal sequence occupies residues Met1 to Gly21. The Ig-like domain occupies Ile22–Glu110. Residues Asn38 and Asn44 are each glycosylated (N-linked (GlcNAc...) asparagine). An intrachain disulfide couples Cys43 to Cys107.

As to quaternary structure, alpha-beta TR is a heterodimer composed of an alpha and beta chain; disulfide-linked. The alpha-beta TR is associated with the transmembrane signaling CD3 coreceptor proteins to form the TR-CD3 (TcR or TCR). The assembly of alpha-beta TR heterodimers with CD3 occurs in the endoplasmic reticulum where a single alpha-beta TR heterodimer associates with one CD3D-CD3E heterodimer, one CD3G-CD3E heterodimer and one CD247 homodimer forming a stable octameric structure. CD3D-CD3E and CD3G-CD3E heterodimers preferentially associate with TR alpha and TR beta chains, respectively. The association of the CD247 homodimer is the last step of TcR assembly in the endoplasmic reticulum and is required for transport to the cell surface.

Its subcellular location is the cell membrane. Its function is as follows. V region of the variable domain of T cell receptor (TR) alpha chain that participates in the antigen recognition. Alpha-beta T cell receptors are antigen specific receptors which are essential to the immune response and are present on the cell surface of T lymphocytes. Recognize peptide-major histocompatibility (MH) (pMH) complexes that are displayed by antigen presenting cells (APC), a prerequisite for efficient T cell adaptive immunity against pathogens. Binding of alpha-beta TR to pMH complex initiates TR-CD3 clustering on the cell surface and intracellular activation of LCK that phosphorylates the ITAM motifs of CD3G, CD3D, CD3E and CD247 enabling the recruitment of ZAP70. In turn ZAP70 phosphorylates LAT, which recruits numerous signaling molecules to form the LAT signalosome. The LAT signalosome propagates signal branching to three major signaling pathways, the calcium, the mitogen-activated protein kinase (MAPK) kinase and the nuclear factor NF-kappa-B (NF-kB) pathways, leading to the mobilization of transcription factors that are critical for gene expression and essential for T cell growth and differentiation. The T cell repertoire is generated in the thymus, by V-(D)-J rearrangement. This repertoire is then shaped by intrathymic selection events to generate a peripheral T cell pool of self-MH restricted, non-autoaggressive T cells. Post-thymic interaction of alpha-beta TR with the pMH complexes shapes TR structural and functional avidity. This Homo sapiens (Human) protein is T cell receptor alpha variable 22.